Reading from the N-terminus, the 410-residue chain is 45 kDa immediate-early protein 2 (410 aa).

The tract at residues 36–166 (SEEEQGEEVE…SKRISELDNE (131 aa)) is disordered. Composition is skewed to low complexity over residues 47–67 (RGATASSPSTGSGTPRVTSPT), 90–101 (SSSSSSCSSASD), and 132–147 (AASSSLLSCGHQSSGG). A zinc finger spans residues 257–283 (VRCRLGTMCNLALSTPFLMEHTMPVTH).

In terms of biological role, activates the E1.7 promoter. This activation is augmented by the IE1 protein. It down-regulates the transcription of genes under the control of the major IE promoter. This chain is 45 kDa immediate-early protein 2 (UL122), found in Homo sapiens (Human).